Reading from the N-terminus, the 878-residue chain is DNA mismatch repair protein MutS (878 aa).

629–636 contributes to the ATP binding site; the sequence is GPNMAGKS.

This sequence belongs to the DNA mismatch repair MutS family.

Functionally, this protein is involved in the repair of mismatches in DNA. It is possible that it carries out the mismatch recognition step. This protein has a weak ATPase activity. This is DNA mismatch repair protein MutS from Roseobacter denitrificans (strain ATCC 33942 / OCh 114) (Erythrobacter sp. (strain OCh 114)).